The primary structure comprises 338 residues: Ferredoxin--NADP reductase (338 aa).

Aspartate 32, glutamine 40, tyrosine 45, valine 85, phenylalanine 120, aspartate 287, and threonine 327 together coordinate FAD.

This sequence belongs to the ferredoxin--NADP reductase type 2 family. As to quaternary structure, homodimer. Requires FAD as cofactor.

The catalysed reaction is 2 reduced [2Fe-2S]-[ferredoxin] + NADP(+) + H(+) = 2 oxidized [2Fe-2S]-[ferredoxin] + NADPH. The polypeptide is Ferredoxin--NADP reductase (Wolbachia pipientis wMel).